An 857-amino-acid chain; its full sequence is Dimethylglycine dehydrogenase, mitochondrial (857 aa).

A mitochondrion-targeting transit peptide spans 1 to 43 (MLRLGALRLRGLALRSSQGRPSSAGLREGQESPPSPPEWKDRA). The tract at residues 15 to 39 (RSSQGRPSSAGLREGQESPPSPPEW) is disordered. Residues 52–53 (CV), 73–74 (EK), and 80–88 (GSTWHAAGL) contribute to the FAD site. His-84 carries the tele-8alpha-FAD histidine modification. Lys-107 carries the post-translational modification N6-acetyllysine. Lys-141 bears the N6-acetyllysine; alternate mark. Position 141 is an N6-succinyllysine; alternate (Lys-141). At Lys-161 the chain carries N6-acetyllysine. Val-212 contributes to the FAD binding site. Position 216 is an N6-acetyllysine (Lys-216). Residue Trp-244 coordinates FAD. N6-succinyllysine occurs at positions 310 and 312. N6-acetyllysine occurs at positions 328 and 353. FAD is bound at residue 390 to 395 (FGYGII). N6-acetyllysine; alternate is present on residues Lys-427, Lys-469, and Lys-516. An N6-succinyllysine; alternate mark is found at Lys-427, Lys-469, and Lys-516. 573-575 (ELT) contacts (6S)-5,6,7,8-tetrahydrofolate. Lys-648 carries the N6-acetyllysine; alternate modification. Lys-648 carries the N6-succinyllysine; alternate modification. Residues Tyr-669, 676-678 (ELY), and Tyr-737 contribute to the (6S)-5,6,7,8-tetrahydrofolate site. Position 757 is an N6-acetyllysine (Lys-757). Residue Lys-786 is modified to N6-acetyllysine; alternate. Lys-786 carries the N6-succinyllysine; alternate modification. Lys-788 is modified (N6-succinyllysine).

It belongs to the GcvT family. FAD is required as a cofactor.

The protein localises to the mitochondrion. It catalyses the reaction (6S)-5,6,7,8-tetrahydrofolyl-(gamma-L-Glu)(n) + N,N-dimethylglycine + oxidized [electron-transfer flavoprotein] + H(+) = (6R)-5,10-methylenetetrahydrofolyl-(gamma-L-Glu)(n) + sarcosine + reduced [electron-transfer flavoprotein]. It functions in the pathway amine and polyamine degradation; betaine degradation; sarcosine from betaine: step 2/2. Catalyzes the demethylation of N,N-dimethylglycine to sarcosine. Also has activity with sarcosine in vitro. The polypeptide is Dimethylglycine dehydrogenase, mitochondrial (Dmgdh) (Rattus norvegicus (Rat)).